The following is a 197-amino-acid chain: Wadjet protein JetB (197 aa).

Its function is as follows. Component of antiplasmid transformation system Wadjet type I, composed of JetA, JetB, JetC and JetD. Expression of Wadjet type I in B.subtilis (strain BEST7003) reduces the transformation efficiency of plasmid pHCMC05. In Bacillus cereus (strain Q1), this protein is Wadjet protein JetB.